We begin with the raw amino-acid sequence, 84 residues long: Trefoil factor 1 (84 aa).

The N-terminal stretch at 1-24 (MATMENKVICALVLVSMLALGTLA) is a signal peptide. In terms of domain architecture, P-type spans 29 to 72 (ETCTVAPRERQNCGFPGVTPSQCANKGCCFDDTVRGVPWCFYPN). Cystine bridges form between Cys-31–Cys-57, Cys-41–Cys-56, and Cys-51–Cys-68.

In terms of assembly, heterodimer with GKN2; disulfide linked. As to expression, found in stomach, with highest levels in the upper gastric mucosal cells (at protein level). Detected in goblet cells of the small and large intestine and rectum, small submucosal glands in the esophagus, mucous acini of the sublingual gland, submucosal glands of the trachea, and epithelial cells lining the exocrine pancreatic ducts but not in the remainder of the pancreas (at protein level). Scattered expression is detected in the epithelial cells of the gallbladder and submucosal glands of the vagina, and weak expression is observed in the bronchial goblet cells of the pseudostratified epithelia in the respiratory system (at protein level). Detected in urine (at protein level). Strongly expressed in breast cancer but at low levels in normal mammary tissue. It is regulated by estrogen in MCF-7 cells. Strong expression found in normal gastric mucosa and in the regenerative tissues surrounding ulcerous lesions of gastrointestinal tract, but lower expression found in gastric cancer (at protein level).

It is found in the secreted. Functionally, stabilizer of the mucous gel overlying the gastrointestinal mucosa that provides a physical barrier against various noxious agents. May inhibit the growth of calcium oxalate crystals in urine. The chain is Trefoil factor 1 (TFF1) from Homo sapiens (Human).